The following is an 87-amino-acid chain: Large ribosomal subunit protein bL27 (87 aa).

Positions methionine 1 to leucine 21 are disordered.

This sequence belongs to the bacterial ribosomal protein bL27 family.

The polypeptide is Large ribosomal subunit protein bL27 (Burkholderia multivorans (strain ATCC 17616 / 249)).